A 464-amino-acid polypeptide reads, in one-letter code: D-2-hydroxyglutarate dehydrogenase (464 aa).

One can recognise an FAD-binding PCMH-type domain in the interval 37–216; the sequence is FAPAPSAIVF…VEATMRLERQ (180 aa). Residues R325, S329, and K339 each coordinate (R)-2-hydroxyglutarate. (R)-malate contacts are provided by R325, S329, and K339. Zn(2+) contacts are provided by H374 and H381. (R)-2-hydroxyglutarate is bound at residue N383. Position 420 (E420) interacts with Zn(2+). H421 lines the (R)-2-hydroxyglutarate pocket. Residue H421 coordinates (R)-malate.

The protein belongs to the FAD-binding oxidoreductase/transferase type 4 family. Homodimer. The cofactor is FAD.

The enzyme catalyses (R)-2-hydroxyglutarate + A = 2-oxoglutarate + AH2. It carries out the reaction (R)-malate + A = oxaloacetate + AH2. Activated by Zn(2+) ions at low concentrations (10 uM) and inhibited by Zn(2+), Fe(2+) and Ni(2+) at high concentrations (10 mM). Its function is as follows. Catalyzes the dehydrogenation of (R)-2-hydroxyglutarate (D-2-hydroxyglutarate or D-2-HG) to 2-oxoglutarate and of (R)-malate (D-malate) to oxaloacetate. Is functionally tied to L-serine biosynthesis, via its coupling with the D-3-phosphoglycerate dehydrogenase SerA, encoded by the adjacent gene in the locus. Is required for the utilization of D-2-hydroxyglutarate as well as D-malate as the sole carbon source for growth of P.stutzeri. Active in vitro with artificial electron acceptors such as 2,6-dichlorophenolindophenol (DCPIP) and appears to couple with electron transfer flavoprotein (ETF) for efficient oxidation of both D-2-hydroxyglutarate and D-malate in vivo. Cannot catalyze the oxidation of L-2-hydroxyglutarate, D-lactate, D-tartrate, D-2-hydroxybutanoate, D-mandelate, D-glycerate and D-phenyllactate. This chain is D-2-hydroxyglutarate dehydrogenase, found in Stutzerimonas stutzeri (strain A1501) (Pseudomonas stutzeri).